Here is a 585-residue protein sequence, read N- to C-terminus: Putative lipase ATG15 (585 aa).

Residues 1 to 21 (MMGLDLLVSLLALSVSPCIAA) traverse the membrane as a helical; Signal-anchor for type II membrane protein segment. Topologically, residues 22–585 (TRSPLQIPVL…SASPPITSPP (564 aa)) are lumenal. Residues Asn-171, Asn-193, and Asn-275 are each glycosylated (N-linked (GlcNAc...) asparagine). The active-site Charge relay system is Ser-291. 2 N-linked (GlcNAc...) asparagine glycosylation sites follow: Asn-340 and Asn-437. The tract at residues 500–526 (TTTSTVPTASPAPTITPTSPPTTTAST) is disordered.

Belongs to the AB hydrolase superfamily. Lipase family. Binds to both phosphatidylinositol (PI) and phosphatidylinositol 3,5-bisphosphate (PIP2).

Its subcellular location is the endosome. It is found in the multivesicular body membrane. The protein resides in the prevacuolar compartment membrane. The catalysed reaction is a triacylglycerol + H2O = a diacylglycerol + a fatty acid + H(+). Functionally, lipase which is essential for lysis of subvacuolar cytoplasm to vacuole targeted bodies and intravacuolar autophagic bodies. Involved in the lysis of intravacuolar multivesicular body (MVB) vesicles. The intravacuolar membrane disintegration by ATG15 is critical to life span extension. The sequence is that of Putative lipase ATG15 (ATG15) from Ajellomyces capsulatus (strain NAm1 / WU24) (Darling's disease fungus).